Consider the following 555-residue polypeptide: Efflux pump FUS6 (555 aa).

The tract at residues 1 to 23 is disordered; it reads MASAKDAQPAPEKSLSSDPQPEP. The next 5 helical transmembrane spans lie at 31 to 51, 67 to 87, 97 to 117, 130 to 150, and 159 to 179; these read WLIF…TSII, LYVW…PIFA, SLTL…GGAH, GIGG…MVSI, and IIGG…GAFA. The N-linked (GlcNAc...) asparagine glycan is linked to N181. 3 helical membrane-spanning segments follow: residues 186–206, 225–245, and 253–273; these read WIFY…GLFL, WGGS…LSWG, and GWQT…FFAY. N291 carries N-linked (GlcNAc...) asparagine glycosylation. 6 helical membrane passes run 297 to 317, 332 to 352, 360 to 380, 393 to 413, 425 to 445, and 501 to 521; these read LLVI…FLPV, VMLF…GITI, VWHF…TLLD, ILFG…ILAS, AWTF…AAVF, and KVVW…CFFV. N545 carries N-linked (GlcNAc...) asparagine glycosylation.

It belongs to the major facilitator superfamily. TCR/Tet family.

It is found in the membrane. Efflux pump; part of the gene cluster that mediates the biosynthesis of the mycotoxin fusarin C. Within the cluster, FUS1, FUS2, FUS8 and FUS9 are sufficient for fusarin production. The other FUS cluster members are not essential for fusarin C biosynthesis. This chain is Efflux pump FUS6, found in Gibberella fujikuroi (strain CBS 195.34 / IMI 58289 / NRRL A-6831) (Bakanae and foot rot disease fungus).